Consider the following 316-residue polypeptide: Olfactory receptor 10H3 (316 aa).

At 1 to 25 the chain is on the extracellular side; that stretch reads MPGQNYRTISEFILSGFSAFPQQLL. The helical transmembrane segment at 26-46 threads the bilayer; it reads PVLFLLYLLMFLFTLLGNLLI. The Cytoplasmic portion of the chain corresponds to 47–54; the sequence is MATVWIER. The helical transmembrane segment at 55–75 threads the bilayer; that stretch reads RLHTPMYLFLCALSISEILFT. Over 76-99 the chain is Extracellular; that stretch reads VAITPRMLADLLFTHRSITFVACA. Cysteines 98 and 190 form a disulfide. The chain crosses the membrane as a helical span at residues 100-120; that stretch reads IQMFFSFMFGFTHSFLLMVMG. Residues 121–139 lie on the Cytoplasmic side of the membrane; sequence YDHYVTICHPLHYNMLMSP. The chain crosses the membrane as a helical span at residues 140–160; sequence RGCAHLVAWTWAGGSVMGMMV. Topologically, residues 161–197 are extracellular; the sequence is TMMVFHLTFCGSNVIHHFLCHVLSLLKLACGSKTSSV. The chain crosses the membrane as a helical span at residues 198–218; it reads IMGVMLVCVTALIGCLFLIIL. Topologically, residues 219–238 are cytoplasmic; that stretch reads SFVFIVAAILRIPSAEGRHK. The helical transmembrane segment at 239–259 threads the bilayer; it reads TFSTCVSHLTVVVMHYSFASL. The Extracellular portion of the chain corresponds to 260–272; the sequence is IYLKPKGLHSMYS. The chain crosses the membrane as a helical span at residues 273–293; sequence DALMATTYTVFTPFLSPIIFS. Topologically, residues 294–316 are cytoplasmic; the sequence is LRNKELKNAINKNFCRRFCPLSS.

Belongs to the G-protein coupled receptor 1 family.

Its subcellular location is the cell membrane. In terms of biological role, odorant receptor. The protein is Olfactory receptor 10H3 (OR10H3) of Homo sapiens (Human).